Here is a 140-residue protein sequence, read N- to C-terminus: Large ribosomal subunit protein uL11 (140 aa).

The protein belongs to the universal ribosomal protein uL11 family. In terms of assembly, part of the ribosomal stalk of the 50S ribosomal subunit. Interacts with L10 and the large rRNA to form the base of the stalk. L10 forms an elongated spine to which L12 dimers bind in a sequential fashion forming a multimeric L10(L12)X complex. In terms of processing, one or more lysine residues are methylated.

Functionally, forms part of the ribosomal stalk which helps the ribosome interact with GTP-bound translation factors. In Nitratidesulfovibrio vulgaris (strain ATCC 29579 / DSM 644 / CCUG 34227 / NCIMB 8303 / VKM B-1760 / Hildenborough) (Desulfovibrio vulgaris), this protein is Large ribosomal subunit protein uL11.